We begin with the raw amino-acid sequence, 322 residues long: RNA-binding protein KhpB (322 aa).

The interval 3-52 (VFEGNTVAAAIAAGLKQLHRTRDQVEVEVIAEAKKGFLGLGKHPAQVRLT) is jag_N domain. Low complexity predominate over residues 58 to 82 (AAPATTPTSATATAQQSVATESTTA). The tract at residues 58–162 (AAPATTPTSA…AADQSQTPRT (105 aa)) is disordered. The residue at position 89 (Thr-89) is a Phosphothreonine. Polar residues predominate over residues 89–99 (TVQTPKSTPTR). Residues 100-129 (QAKTSQATTSAAKPATSKAKAVAKPASMAV) show a composition bias toward low complexity. Residues 141–161 (SKPATTSKTKSVAADQSQTPR) are compositionally biased toward polar residues. In terms of domain architecture, KH spans 174 to 251 (ETAVRALCDY…ASHVNVVLDV (78 aa)). One can recognise an R3H domain in the interval 256-322 (ERRAATLKRL…HRAVVVAIRK (67 aa)).

Forms a complex with KhpA.

Its subcellular location is the cytoplasm. Functionally, a probable RNA chaperone. Forms a complex with KhpA which binds to cellular RNA and controls its expression. Plays a role in peptidoglycan (PG) homeostasis and cell length regulation. Necessary for correct cell elongation. The chain is RNA-binding protein KhpB from Lactiplantibacillus plantarum (strain ATCC BAA-793 / NCIMB 8826 / WCFS1) (Lactobacillus plantarum).